The sequence spans 1187 residues: Nucleolar protein 6 (1187 aa).

The segment covering 1-20 (MGRIKENQSKKKTLLRDSKA) has biased composition (basic and acidic residues). 2 disordered regions span residues 1–64 (MGRI…FKHP) and 1134–1187 (REQR…SALC).

It belongs to the NRAP family. Part of the small subunit (SSU) processome, composed of more than 70 proteins and the RNA chaperone small nucleolar RNA (snoRNA) U3.

Its subcellular location is the nucleus. The protein localises to the nucleolus. It localises to the chromosome. Its function is as follows. Part of the small subunit (SSU) processome, first precursor of the small eukaryotic ribosomal subunit. During the assembly of the SSU processome in the nucleolus, many ribosome biogenesis factors, an RNA chaperone and ribosomal proteins associate with the nascent pre-rRNA and work in concert to generate RNA folding, modifications, rearrangements and cleavage as well as targeted degradation of pre-ribosomal RNA by the RNA exosome. This Drosophila mojavensis (Fruit fly) protein is Nucleolar protein 6.